The chain runs to 321 residues: Reticulon-2 (321 aa).

Disordered regions lie at residues 1–36 (MGHV…SPVT) and 65–85 (PPVR…PREE). Residues 134–321 (VKDLLYWRDI…TVKKPPAKQK (188 aa)) form the Reticulon domain. 2 consecutive transmembrane segments (helical) span residues 163-183 (FSVI…TLTL) and 250-270 (FLVI…ITVL).

The protein localises to the endoplasmic reticulum membrane. It is found in the sarcoplasmic reticulum membrane. The protein resides in the cell membrane. It localises to the sarcolemma. Its subcellular location is the T-tubule. The protein localises to the cytoplasm. It is found in the myofibril. The protein resides in the sarcomere. It localises to the z line. Its subcellular location is the cytoskeleton. Inhibits amyloid precursor protein processing, probably by blocking BACE1 activity. Enhances trafficking of the glutamate transporter SLC1A1/EAAC1 from the endoplasmic reticulum to the cell surface. Plays a role in the translocation of SLC2A4/GLUT4 from intracellular membranes to the cell membrane which facilitates the uptake of glucose into the cell. This Xenopus tropicalis (Western clawed frog) protein is Reticulon-2.